A 938-amino-acid polypeptide reads, in one-letter code: Isoleucine--tRNA ligase (938 aa).

Residues 58 to 68 (PYANGNIHIGH) carry the 'HIGH' region motif. Glu-561 contacts L-isoleucyl-5'-AMP. The 'KMSKS' region motif lies at 602–606 (KMSKS). An ATP-binding site is contributed by Lys-605. Zn(2+)-binding residues include Cys-901, Cys-904, Cys-921, and Cys-924.

The protein belongs to the class-I aminoacyl-tRNA synthetase family. IleS type 1 subfamily. In terms of assembly, monomer. The cofactor is Zn(2+).

The protein resides in the cytoplasm. The catalysed reaction is tRNA(Ile) + L-isoleucine + ATP = L-isoleucyl-tRNA(Ile) + AMP + diphosphate. Its function is as follows. Catalyzes the attachment of isoleucine to tRNA(Ile). As IleRS can inadvertently accommodate and process structurally similar amino acids such as valine, to avoid such errors it has two additional distinct tRNA(Ile)-dependent editing activities. One activity is designated as 'pretransfer' editing and involves the hydrolysis of activated Val-AMP. The other activity is designated 'posttransfer' editing and involves deacylation of mischarged Val-tRNA(Ile). This is Isoleucine--tRNA ligase from Yersinia enterocolitica serotype O:8 / biotype 1B (strain NCTC 13174 / 8081).